Consider the following 514-residue polypeptide: WD repeat-containing protein 26 (514 aa).

One can recognise a CTLH domain in the interval 9 to 84 (EHPSATKFRN…EYLEDGKVLE (76 aa)). 6 WD repeats span residues 206 to 245 (EHCN…HLLK), 252 to 291 (GHAY…GELR), 297 to 337 (SHED…DSWE), 377 to 416 (QEDH…LVRK), 419 to 461 (GVTQ…PIAE), and 464 to 504 (GHTR…DHQN).

In terms of assembly, forms homooligomers. Identified in the CTLH complex that contains GID4, RANBP9 and/or RANBP10, MKLN1, MAEA, RMND5A (or alternatively its paralog RMND5B), GID8, ARMC8, WDR26 and YPEL5. Within this complex, MAEA, RMND5A (or alternatively its paralog RMND5B), GID8, WDR26, and RANBP9 and/or RANBP10 form the catalytic core, while GID4, MKLN1, ARMC8 and YPEL5 have ancillary roles. Interacts with DDB1-CUL4A/B E3 ligase complexes. Forms a complex composed of at least WDR26, a G-beta:gamma unit, and PLCB2. Interacts with AXIN1.

It localises to the cytoplasm. Its subcellular location is the nucleus. The protein resides in the mitochondrion. Functionally, G-beta-like protein involved in cell signal transduction. Acts as a negative regulator in MAPK signaling pathway. Functions as a scaffolding protein to promote G beta:gamma-mediated PLCB2 plasma membrane translocation and subsequent activation in leukocytes. Core component of the CTLH E3 ubiquitin-protein ligase complex that selectively accepts ubiquitin from UBE2H and mediates ubiquitination and subsequent proteasomal degradation of the transcription factor HBP1. Acts as a negative regulator of the canonical Wnt signaling pathway through preventing ubiquitination of beta-catenin CTNNB1 by the beta-catenin destruction complex, thus negatively regulating CTNNB1 degradation. Protects cells from oxidative stress-induced apoptosis via the down-regulation of AP-1 transcriptional activity as well as by inhibiting cytochrome c release from mitochondria. Also protects cells by promoting hypoxia-mediated autophagy and mitophagy. In Rattus norvegicus (Rat), this protein is WD repeat-containing protein 26 (Wdr26).